A 239-amino-acid polypeptide reads, in one-letter code: MRGILIAIEGVNRVGKSTQAMRLKKALECMDYNAVCIRFPNPDTTTGDLILQVLNKMIEMSSEQLHKLFTKHCSEFVAEIAALLKLNFIVIVDRYIWSGLAYAQADGITIETKNIFKPDYTFFLSSKKPLNEKPLTLQRLFETKEKQETIFTNFTIIMNDVPKNRLCIIPATLNKEIIHTMILTKTIKVFDNNSCLNYIKMYDDKYLNVQELNLFDFEWQKCIEDNNDKEEYDDDDFII.

10 to 17 is an ATP binding site; sequence GVNRVGKS.

Belongs to the thymidylate kinase family.

It catalyses the reaction dTMP + ATP = dTDP + ADP. It functions in the pathway pyrimidine metabolism; dTTP biosynthesis. Catalyzes the conversion of dTMP to dTDP. In African swine fever virus (isolate Tick/South Africa/Pretoriuskop Pr4/1996) (ASFV), this protein is Thymidylate kinase (TMK).